A 119-amino-acid polypeptide reads, in one-letter code: MAKLTYRGSEYTKFKKFRIKKNDEVICITGKHKGKRGKVLSIDKKRDRVIVEGLNKRKRFMRPTQENPQGGVIEVEAPIHISNVMFYDPKKKKKAGVRVGFETVKGKKVRVSRPDKKEL.

It belongs to the universal ribosomal protein uL24 family. In terms of assembly, part of the 50S ribosomal subunit.

In terms of biological role, one of two assembly initiator proteins, it binds directly to the 5'-end of the 23S rRNA, where it nucleates assembly of the 50S subunit. Functionally, one of the proteins that surrounds the polypeptide exit tunnel on the outside of the subunit. The sequence is that of Large ribosomal subunit protein uL24 from Leptospira interrogans serogroup Icterohaemorrhagiae serovar copenhageni (strain Fiocruz L1-130).